The sequence spans 847 residues: Putative disease resistance RPP13-like protein 2 (847 aa).

A coiled-coil region spans residues 26-42 (GVKDDLEELKTELTCIQ). An NB-ARC domain is found at 142-446 (STSRVREVRR…AEGFIQEDEE (305 aa)). 191–198 (GMEGLGKT) lines the ATP pocket. LRR repeat units follow at residues 587–610 (LVHLRYLGIADTVVNNLPDFISNL), 612–634 (FLQTLDASGNSFERMTDLSNLTS), 703–726 (LKNLRVLKIEVVSFSLFSEETVRF), 749–774 (FPSLESLTLVTNLQEDPMPTLQKLQR), and 807–830 (IKRLDELEIEEEAMPCLMKLNLDN).

Belongs to the disease resistance NB-LRR family. RPP13 subfamily.

In terms of biological role, potential disease resistance protein. In Arabidopsis thaliana (Mouse-ear cress), this protein is Putative disease resistance RPP13-like protein 2 (RPP13L2).